Consider the following 401-residue polypeptide: MTRPDLNERILSLRKLRLAQCRTRTRRTIERRNGVRLEINGSWLVEFCSNDYLGLAQHFEIIAALQDAAARNGIGATASHLICGHHAIHKALEYELAEWLGYPRALLFGSGFTANLAVQQALLTKENDICVQDRLNHASLIDATRLAGCRLRRYPHLDVDGAAHQLKNAPEGAAMLATDGIFSMDGDIAPLRALSLVARTQQALMYVDDAHGIGVTGPQGRGCIAAAWLSVEEVPLQLVTLSKALGGYGAAVLGSATLIQHLAETARPYIYTTALPPAQAAAALTAIRIARRDEWRRQRLQELVERFRENSRRHGLEIMDSETPIQPLQCGDETTTMAMSAALEREGFLVNAIRPPTVPEGKSRLRVTLSALHTTEQIDTLVQALARSRDTLATEAAPVQV.

Arg24 provides a ligand contact to substrate. 111–112 (GF) provides a ligand contact to pyridoxal 5'-phosphate. Position 137 (His137) interacts with substrate. Residues Ser183, His211, and Thr240 each contribute to the pyridoxal 5'-phosphate site. An N6-(pyridoxal phosphate)lysine modification is found at Lys243. Position 357 (Thr357) interacts with substrate.

The protein belongs to the class-II pyridoxal-phosphate-dependent aminotransferase family. BioF subfamily. Homodimer. Requires pyridoxal 5'-phosphate as cofactor.

It catalyses the reaction 6-carboxyhexanoyl-[ACP] + L-alanine + H(+) = (8S)-8-amino-7-oxononanoate + holo-[ACP] + CO2. Its pathway is cofactor biosynthesis; biotin biosynthesis. Catalyzes the decarboxylative condensation of pimeloyl-[acyl-carrier protein] and L-alanine to produce 8-amino-7-oxononanoate (AON), [acyl-carrier protein], and carbon dioxide. This chain is 8-amino-7-oxononanoate synthase, found in Xylella fastidiosa (strain M12).